We begin with the raw amino-acid sequence, 391 residues long: F-box only protein 5 (391 aa).

One can recognise an F-box domain in the interval 198–245 (AELFHRDFKHLLTKILRHLSAMDLINVISVSTTWRKILQKDNSAYNSY). The segment at 318-366 (CLKVCVDCSSPAKYDPYLHRATCTRESCKFDFCTLCSCKYHGSKCCQTS) adopts a ZBR-type zinc-finger fold. Zn(2+) is bound by residues Cys-322, Cys-325, Cys-340, Cys-345, Cys-350, Cys-353, His-358, and Cys-363. Positions 365–391 (TSKPRSYRVPSEPLPGSKKSKQNLRRL) are disordered. Basic residues predominate over residues 382-391 (KKSKQNLRRL).

As to quaternary structure, part of a SCF (SKP1-cullin-F-box) protein ligase complex. Interacts with btrc. Interacts with skp1. Interacts with cdc20. Interacts with pin1; stabilizes fbxo5 by preventing its association with btrc in an isomerization-dependent pathway; this interaction is present during G2 phase and prevents fbxo5 degradation. Interacts with plk1. In terms of processing, proteolysed; proteolysis is induced by both cyclin B-cdk1 and cyclin A-cdk1/2 complex through probable phosphorylation. Proteolysis is inhibited by pin1 during G2.

The protein localises to the nucleus. It is found in the cytoplasm. It localises to the cytoskeleton. Its subcellular location is the spindle. The protein resides in the microtubule organizing center. The protein localises to the centrosome. It participates in protein modification; protein ubiquitination. Regulates progression through early mitosis by inhibiting the anaphase promoting complex/cyclosome (APC). Binds to the APC activators cdc20 to prevent APC activation. Can also bind directly to the APC to inhibit substrate-binding. Required to arrest unfertilized eggs at metaphase of meiosis II, by preventing their release from metaphase of meiosis II, through inhibition of APC-dependent cyclin B destruction leading to stabilization of cyclin B-cdk1 complex activity. The protein is F-box only protein 5 of Xenopus tropicalis (Western clawed frog).